The chain runs to 188 residues: Tuftelin (188 aa).

The stretch at 1–181 (SLRKTVQDLL…DRMEHLIEKQ (181 aa)) forms a coiled coil.

It belongs to the tuftelin family. As to quaternary structure, interacts with TFIP11.

Its subcellular location is the secreted. Its function is as follows. Involved in the structural organization of the epidermis. Involved in the mineralization and structural organization of enamel. This Sus scrofa (Pig) protein is Tuftelin (TUFT1).